Here is a 265-residue protein sequence, read N- to C-terminus: Mlc titration factor A (265 aa).

Zn(2+) is bound by residues H111, H148, H152, and E211.

This sequence belongs to the MtfA family. As to quaternary structure, interacts with Mlc. Zn(2+) serves as cofactor.

Its subcellular location is the cytoplasm. Involved in the modulation of the activity of the glucose-phosphotransferase system (glucose-PTS). Interacts with the transcriptional repressor Mlc, preventing its interaction with DNA and leading to the modulation of expression of genes regulated by Mlc, including ptsG, which encodes the PTS system glucose-specific EIICB component. Its function is as follows. Shows zinc-dependent metallopeptidase activity. The protein is Mlc titration factor A of Shigella dysenteriae serotype 1 (strain Sd197).